We begin with the raw amino-acid sequence, 149 residues long: Small ribosomal subunit protein uS13 (149 aa).

The tract at residues 118–149 (GRRHELGLPVRGQRTKSTFRKGSSVGVRRKKR) is disordered.

Belongs to the universal ribosomal protein uS13 family. In terms of assembly, part of the 30S ribosomal subunit. Forms a loose heterodimer with protein S19. Forms two bridges to the 50S subunit in the 70S ribosome.

Located at the top of the head of the 30S subunit, it contacts several helices of the 16S rRNA. In the 70S ribosome it contacts the 23S rRNA (bridge B1a) and protein L5 of the 50S subunit (bridge B1b), connecting the 2 subunits; these bridges are implicated in subunit movement. The sequence is that of Small ribosomal subunit protein uS13 from Methanothermobacter thermautotrophicus (strain ATCC 29096 / DSM 1053 / JCM 10044 / NBRC 100330 / Delta H) (Methanobacterium thermoautotrophicum).